Consider the following 232-residue polypeptide: Leucyl/phenylalanyl-tRNA--protein transferase (232 aa).

The protein belongs to the L/F-transferase family.

Its subcellular location is the cytoplasm. The catalysed reaction is N-terminal L-lysyl-[protein] + L-leucyl-tRNA(Leu) = N-terminal L-leucyl-L-lysyl-[protein] + tRNA(Leu) + H(+). It catalyses the reaction N-terminal L-arginyl-[protein] + L-leucyl-tRNA(Leu) = N-terminal L-leucyl-L-arginyl-[protein] + tRNA(Leu) + H(+). It carries out the reaction L-phenylalanyl-tRNA(Phe) + an N-terminal L-alpha-aminoacyl-[protein] = an N-terminal L-phenylalanyl-L-alpha-aminoacyl-[protein] + tRNA(Phe). Functions in the N-end rule pathway of protein degradation where it conjugates Leu, Phe and, less efficiently, Met from aminoacyl-tRNAs to the N-termini of proteins containing an N-terminal arginine or lysine. This is Leucyl/phenylalanyl-tRNA--protein transferase from Nitrosospira multiformis (strain ATCC 25196 / NCIMB 11849 / C 71).